Here is a 541-residue protein sequence, read N- to C-terminus: Transcription factor STP2 (541 aa).

The segment at 13–32 (VLTRIYDYLKALVQQVIVPN) is i. A disordered region spans residues 35–58 (DDKSSKSTPFEKLEPAKQNHPQKD). The II stretch occupies residues 73 to 105 (LFPKQNNKQLSLTSKSSVVPCALNLDNLETPFS). The C2H2-type 1 zinc finger occupies 204–226 (YICHYCDARFRIRGYLTRHIKKH). A C2H2-type 2; atypical zinc finger spans residues 232–267 (YHCPFFDNSISQELRCHTSGGFSRRDTYKTHLKSRH). Residues 284–309 (GVCTQCGEHFSTSESWVENHIEAGSC) form a C2H2-type 3; atypical zinc finger. A compositionally biased stretch (low complexity) spans 452–462 (SSASSALSPLS). The interval 452-497 (SSASSALSPLSGDPITTTETNKSYPLDSEQSLLEPDKTEEDAINQS) is disordered. Residues 465–482 (PITTTETNKSYPLDSEQS) are compositionally biased toward polar residues.

In terms of assembly, interacts (via Region II) with SSY5; protease component of the SPS-sensor. Activated by the amino acid-induced proteolytic removal of an N-terminal inhibitory domain by serine protease SSY5, an intrinsic component of the SPS-sensor. Processing requires at least 2 components of the SCF(GRR1) ubiquitin ligase complex, namely the F-box protein GRR1 and the E2 enzyme CDC34, but does not depend on the proteasome. Processing is negatively regulated by the protein phosphatase 2A regulatory subunit RTS1.

It is found in the cell membrane. Its subcellular location is the nucleus. Transcription factor involved in the regulation of gene expression in response to extracellular amino acid levels. Synthesized as latent cytoplasmic precursor, which, upon a signal initiated by the plasma membrane SPS (SSY1-PTR3-SSY5) amino acid sensor system, becomes proteolytically activated and relocates to the nucleus, where it induces the expression of SPS-sensor-regulated genes, including the amino-acid permeases BAP2 and BAP3. Binding to promoters is facilitated by DAL81. Involved in the repression of genes subject to nitrogen catabolite repression and genes involved in stress response. Negatively regulated by inner nuclear membrane proteins ASI1, ASI2 and ASI3, which prevent unprocessed precursor forms that escape cytoplasmic anchoring from inducing SPS-sensor-regulated genes. The chain is Transcription factor STP2 (STP2) from Saccharomyces cerevisiae (strain ATCC 204508 / S288c) (Baker's yeast).